Reading from the N-terminus, the 369-residue chain is Somatostatin receptor type 2 (369 aa).

At 1–43 (MDMAYELLNGSQPWLSSPFDLNGSVATANSSNQTEPYYDLTSN) the chain is on the extracellular side. Residues Asn-9, Asn-22, Asn-29, and Asn-32 are each glycosylated (N-linked (GlcNAc...) asparagine). Residues 44 to 67 (AVLTFIYFVVCIIGLCGNTLVIYV) form a helical membrane-spanning segment. The Cytoplasmic portion of the chain corresponds to 68-78 (ILRYAKMKTIT). The chain crosses the membrane as a helical span at residues 79–103 (NIYILNLAIADELFMLGLPFLAMQV). At 104 to 118 (ALVHWPFGKAICRVV) the chain is on the extracellular side. Cysteines 115 and 193 form a disulfide. Residues 119-138 (MTVDGINQFTSIFCLTVMSI) form a helical membrane-spanning segment. The Cytoplasmic portion of the chain corresponds to 139-161 (DRYLAVVHPIKSAKWRRPRTAKM). Residues 162–181 (INVAVWGVSLLVILPIMIYA) form a helical membrane-spanning segment. Topologically, residues 182–207 (GLRSNQWGRSSCTINWPGESGAWYTG) are extracellular. A helical membrane pass occupies residues 208 to 229 (FIIYAFILGFLVPLTIICLCYL). Residues 230–253 (FIIIKVKSSGIRVGSSKRKKSEKK) are Cytoplasmic-facing. A helical membrane pass occupies residues 254–278 (VTRMVSIVVAVFIFCWLPFYIFNVS). At 279-288 (SVSVAISPTP) the chain is on the extracellular side. The chain crosses the membrane as a helical span at residues 289-303 (ALKGMFDFVVVLTYA). Topologically, residues 304-369 (NSCANPILYA…LLNGDLQTSI (66 aa)) are cytoplasmic. The S-palmitoyl cysteine moiety is linked to residue Cys-328. Residues Ser-341, Ser-343, and Ser-348 each carry the phosphoserine modification. Phosphothreonine is present on residues Thr-353 and Thr-354.

Belongs to the G-protein coupled receptor 1 family. In terms of assembly, homodimer and heterodimer with SSTR3 and SSTR5. Heterodimerization with SSTR3 inactivates SSTR3 receptor function. Heterodimerization with SSTR5 is enhanced by agonist stimulation of SSTR2 and increases SSTR2 cell growth inhibition activity. Following agonist stimulation, homodimers dissociate into monomers which is required for receptor internalization. Interacts with beta-arrestin; this interaction is necessary for receptor internalization and is destabilized by heterodimerization with SSTR5 which results in increased recycling of SSTR2 to the cell surface. Interacts (via C-terminus) with SHANK1 (via PDZ domain). Post-translationally, phosphorylated on serine and threonine residues in response to agonist stimulation, leading to receptor desensitization and rapid internalization. Phosphorylated to a greater extent on serine than threonine residues. Threonine phosphorylation is required for arrestin binding and receptor endocytosis but is not necessary for desensitization.

The protein resides in the cell membrane. Its subcellular location is the cytoplasm. Functionally, receptor for somatostatin-14 and -28. This receptor is coupled via pertussis toxin sensitive G proteins to inhibition of adenylyl cyclase. In addition it stimulates phosphotyrosine phosphatase and PLC via pertussis toxin insensitive as well as sensitive G proteins. Inhibits calcium entry by suppressing voltage-dependent calcium channels. Acts as the functionally dominant somatostatin receptor in pancreatic alpha- and beta-cells where it mediates the inhibitory effect of somatostatin-14 on hormone secretion. Inhibits cell growth through enhancement of MAPK1 and MAPK2 phosphorylation and subsequent up-regulation of CDKN1B. Stimulates neuronal migration and axon outgrowth and may participate in neuron development and maturation during brain development. Mediates negative regulation of insulin receptor signaling through PTPN6. Inactivates SSTR3 receptor function following heterodimerization. The protein is Somatostatin receptor type 2 (SSTR2) of Sus scrofa (Pig).